The sequence spans 599 residues: Elongation factor 4 (599 aa).

Positions 2–184 (KHIRNFSIIA…RLVRDIPPPE (183 aa)) constitute a tr-type G domain. Residues 14 to 19 (DHGKST) and 131 to 134 (NKID) contribute to the GTP site.

It belongs to the TRAFAC class translation factor GTPase superfamily. Classic translation factor GTPase family. LepA subfamily.

Its subcellular location is the cell inner membrane. It carries out the reaction GTP + H2O = GDP + phosphate + H(+). In terms of biological role, required for accurate and efficient protein synthesis under certain stress conditions. May act as a fidelity factor of the translation reaction, by catalyzing a one-codon backward translocation of tRNAs on improperly translocated ribosomes. Back-translocation proceeds from a post-translocation (POST) complex to a pre-translocation (PRE) complex, thus giving elongation factor G a second chance to translocate the tRNAs correctly. Binds to ribosomes in a GTP-dependent manner. The sequence is that of Elongation factor 4 from Erwinia tasmaniensis (strain DSM 17950 / CFBP 7177 / CIP 109463 / NCPPB 4357 / Et1/99).